The chain runs to 255 residues: Thiazole synthase (255 aa).

K96 functions as the Schiff-base intermediate with DXP in the catalytic mechanism. Residues G157, A183–G184, and N205–T206 contribute to the 1-deoxy-D-xylulose 5-phosphate site.

This sequence belongs to the ThiG family. In terms of assembly, homotetramer. Forms heterodimers with either ThiH or ThiS.

The protein localises to the cytoplasm. It carries out the reaction [ThiS sulfur-carrier protein]-C-terminal-Gly-aminoethanethioate + 2-iminoacetate + 1-deoxy-D-xylulose 5-phosphate = [ThiS sulfur-carrier protein]-C-terminal Gly-Gly + 2-[(2R,5Z)-2-carboxy-4-methylthiazol-5(2H)-ylidene]ethyl phosphate + 2 H2O + H(+). The protein operates within cofactor biosynthesis; thiamine diphosphate biosynthesis. Functionally, catalyzes the rearrangement of 1-deoxy-D-xylulose 5-phosphate (DXP) to produce the thiazole phosphate moiety of thiamine. Sulfur is provided by the thiocarboxylate moiety of the carrier protein ThiS. In vitro, sulfur can be provided by H(2)S. This is Thiazole synthase from Anoxybacillus flavithermus (strain DSM 21510 / WK1).